We begin with the raw amino-acid sequence, 129 residues long: Small ribosomal subunit protein uS11 (129 aa).

This sequence belongs to the universal ribosomal protein uS11 family. Part of the 30S ribosomal subunit. Interacts with proteins S7 and S18. Binds to IF-3.

Its function is as follows. Located on the platform of the 30S subunit, it bridges several disparate RNA helices of the 16S rRNA. Forms part of the Shine-Dalgarno cleft in the 70S ribosome. The polypeptide is Small ribosomal subunit protein uS11 (Methylobacterium radiotolerans (strain ATCC 27329 / DSM 1819 / JCM 2831 / NBRC 15690 / NCIMB 10815 / 0-1)).